The primary structure comprises 385 residues: G2/mitotic-specific cyclin-B3 (385 aa).

Residues 1-16 are compositionally biased toward polar residues; the sequence is MMLRSQAKNVDLTSQA. 2 disordered regions span residues 1–48 and 63–88; these read MMLR…HSKG and SAKRDPLGKSRTSRRDVENLPPQKSR. 2 stretches are compositionally biased toward basic and acidic residues: residues 17–28 and 63–80; these read DSRHQQKRKQAE and SAKRDPLGKSRTSRRDVE.

Belongs to the cyclin family. Cyclin AB subfamily.

It is found in the nucleus. Its function is as follows. Could be involved at the G2/M (mitosis) transition. Interacts with the CDK1 and CDK2 protein kinases. G2/M cyclins accumulate steadily during G2 and are abruptly destroyed at mitosis. Plays a role during oocyte meiosis II. This chain is G2/mitotic-specific cyclin-B3 (cyb-3), found in Caenorhabditis elegans.